The sequence spans 372 residues: Putative glutamate--cysteine ligase 2 (372 aa).

The protein belongs to the glutamate--cysteine ligase type 2 family. YbdK subfamily. As to quaternary structure, homodimer.

It catalyses the reaction L-cysteine + L-glutamate + ATP = gamma-L-glutamyl-L-cysteine + ADP + phosphate + H(+). Functionally, ATP-dependent carboxylate-amine ligase which exhibits weak glutamate--cysteine ligase activity. The chain is Putative glutamate--cysteine ligase 2 (ybdK) from Salmonella dublin (strain CT_02021853).